A 424-amino-acid polypeptide reads, in one-letter code: Zinc metalloproteinase-disintegrin-like brevilysin H2b (424 aa).

The residue at position 1 (glutamine 1) is a Pyrrolidone carboxylic acid. A Peptidase M12B domain is found at 9–207 (RYVKLAIVAD…YKPQCILNEP (199 aa)). N-linked (GlcNAc...) asparagine glycosylation is present at asparagine 69. Aspartate 96 serves as a coordination point for Ca(2+). Disulfide bonds link cysteine 120–cysteine 202, cysteine 164–cysteine 186, and cysteine 166–cysteine 169. Histidine 145 contributes to the Zn(2+) binding site. Glutamate 146 is an active-site residue. Zn(2+)-binding residues include histidine 149 and histidine 155. Asparagine 185 carries N-linked (GlcNAc...) asparagine glycosylation. 8 residues coordinate Ca(2+): cysteine 202, asparagine 205, valine 217, asparagine 220, leucine 222, glutamate 224, glutamate 227, and aspartate 230. The 87-residue stretch at 215 to 301 (PPVCGNELLE…DCPTDDLQRN (87 aa)) folds into the Disintegrin domain. Intrachain disulfides connect cysteine 218/cysteine 247, cysteine 229/cysteine 242, cysteine 231/cysteine 237, cysteine 241/cysteine 264, cysteine 255/cysteine 261, cysteine 260/cysteine 286, cysteine 273/cysteine 293, cysteine 280/cysteine 312, cysteine 305/cysteine 317, cysteine 324/cysteine 374, cysteine 339/cysteine 385, cysteine 352/cysteine 362, cysteine 369/cysteine 411, and cysteine 405/cysteine 417. A D/ECD-tripeptide motif is present at residues 279 to 281 (DCD). Positions 281, 284, and 296 each coordinate Ca(2+).

Belongs to the venom metalloproteinase (M12B) family. P-III subfamily. P-IIIa sub-subfamily. As to quaternary structure, monomer. Zn(2+) serves as cofactor. In terms of processing, glycosylated. In terms of tissue distribution, expressed by the venom gland.

It is found in the secreted. With respect to regulation, its proteolytic activity is inhibited by EDTA, TPEN, 1,10-phenanthroline, and some thiol compounds, but is enhanced by alkaline earth metal ions (Mg2+, Ca2+, Sr2+, and Ba2+). Its activity is not modulated by urea (4 M). Non-hemorrhagic metalloproteinase that degrades fibrinogen. The alpha chain (FGA) is rapidly degraded, the beta chain (FGB) is degraded very slowly, while the gamma chain is left intact. Shows a prefential cleavage at X-Leu bonds. Cleaves insulin B chain at '29-His-|-Leu-30', '33-Ser-|-His-34', '38-Ala-|-Leu-39' and '40-Tyr-|-Leu-41' bonds. The sequence is that of Zinc metalloproteinase-disintegrin-like brevilysin H2b from Gloydius brevicauda (Korean slamosa snake).